The chain runs to 321 residues: Protein-L-histidine N-pros-methyltransferase (321 aa).

A signal peptide spans 1 to 24 (MRLWLCWLGCYTLLLWALRRRMWA). Asparagine 89 carries N-linked (GlcNAc...) asparagine glycosylation. S-adenosyl-L-homocysteine is bound by residues glutamate 177, asparagine 213, and tyrosine 298.

It belongs to the METTL9 family.

It localises to the endoplasmic reticulum. The protein resides in the mitochondrion. The catalysed reaction is L-histidyl-[protein] + S-adenosyl-L-methionine = N(pros)-methyl-L-histidyl-[protein] + S-adenosyl-L-homocysteine + H(+). Protein-histidine N-methyltransferase that specifically catalyzes 1-methylhistidine (pros-methylhistidine) methylation of target proteins. Mediates methylation of proteins with a His-x-His (HxH) motif (where 'x' is preferably a small amino acid); 1-methylhistidine modification may affect the binding of zinc and other metals to its target proteins. The polypeptide is Protein-L-histidine N-pros-methyltransferase (Gallus gallus (Chicken)).